The chain runs to 178 residues: MDLKNLTQEERSELSLIDVAHFILEQRKETILFPELVKEIQAFLGLKDAEIRERLVQFYTDMNIDGNFISLGNNTWGLRAWYPMDAIDEEVQTQTTPKKKRKSDDDEDEDEEILDDDVDYDDEEIVEELGEEEISLADVLLDEDEDDDDHLPDGIEGDLATVEDDYTDGDYTEDPEDK.

One can recognise an HTH HARE-type domain in the interval 14–81 (LSLIDVAHFI…GNNTWGLRAW (68 aa)). Disordered regions lie at residues 88–122 (DEEVQTQTTPKKKRKSDDDEDEDEEILDDDVDYDD) and 141–178 (LDEDEDDDDHLPDGIEGDLATVEDDYTDGDYTEDPEDK). 3 stretches are compositionally biased toward acidic residues: residues 105 to 122 (DDEDEDEEILDDDVDYDD), 141 to 150 (LDEDEDDDDH), and 161 to 178 (TVEDDYTDGDYTEDPEDK).

The protein belongs to the RpoE family. In terms of assembly, RNAP is composed of a core of 2 alpha, a beta and a beta' subunits. The core is associated with a delta subunit and one of several sigma factors.

Participates in both the initiation and recycling phases of transcription. In the presence of the delta subunit, RNAP displays an increased specificity of transcription, a decreased affinity for nucleic acids, and an increased efficiency of RNA synthesis because of enhanced recycling. The sequence is that of Probable DNA-directed RNA polymerase subunit delta from Listeria monocytogenes serovar 1/2a (strain ATCC BAA-679 / EGD-e).